Here is a 487-residue protein sequence, read N- to C-terminus: Beta-barrel assembly-enhancing protease (487 aa).

A signal peptide spans 1–27; that stretch reads MFRQLKKNLVATLIAALALGQVAPAFA. His-136 contributes to the Zn(2+) binding site. Residue Glu-137 is part of the active site. Zn(2+) contacts are provided by His-140 and Glu-201. Asp-205 acts as the Proton donor in catalysis. TPR repeat units follow at residues 309–342 and 427–460; these read HAAQ…EPNN and DQEL…AKLG.

This sequence belongs to the peptidase M48 family. BepA subfamily. The cofactor is Zn(2+).

It localises to the periplasm. Functions both as a chaperone and a metalloprotease. Maintains the integrity of the outer membrane by promoting either the assembly or the elimination of outer membrane proteins, depending on their folding state. In Salmonella typhi, this protein is Beta-barrel assembly-enhancing protease.